The sequence spans 619 residues: tRNA uridine 5-carboxymethylaminomethyl modification enzyme MnmG (619 aa).

FAD-binding positions include 14–19 (GAGHAG), Val-126, and Ser-181. 273–287 (GPRYCPSIEDKIMRF) serves as a coordination point for NAD(+). Gln-370 contributes to the FAD binding site.

It belongs to the MnmG family. In terms of assembly, homodimer. Heterotetramer of two MnmE and two MnmG subunits. FAD is required as a cofactor.

Its subcellular location is the cytoplasm. NAD-binding protein involved in the addition of a carboxymethylaminomethyl (cmnm) group at the wobble position (U34) of certain tRNAs, forming tRNA-cmnm(5)s(2)U34. The polypeptide is tRNA uridine 5-carboxymethylaminomethyl modification enzyme MnmG (Syntrophotalea carbinolica (strain DSM 2380 / NBRC 103641 / GraBd1) (Pelobacter carbinolicus)).